The chain runs to 220 residues: MATLLHIDSSVFPAEASASRSVTAAFRRTWEEQHPEGTVIYRDLAAVPVPHITADAWSAGYADPSERSTRQSAAFAARLELIEELERADVILIGAPMYNYTVPSTLKAWLDSVLLLGRTAGEAPSAQGTPTVVVASRGGSYAPGTPREDFEFVQNYLEAVLRSTLGLDLEFIVPELTMAPRNPAMSELLPLFESSRERAHSEAVTKAKELTERLTADNGR.

Residues Ser-10, 17-19 (SAS), and 136-139 (SRGG) each bind FMN. The tract at residues 200 to 220 (HSEAVTKAKELTERLTADNGR) is disordered.

Belongs to the azoreductase type 1 family. In terms of assembly, homodimer. FMN serves as cofactor.

The catalysed reaction is 2 a quinone + NADH + H(+) = 2 a 1,4-benzosemiquinone + NAD(+). It carries out the reaction N,N-dimethyl-1,4-phenylenediamine + anthranilate + 2 NAD(+) = 2-(4-dimethylaminophenyl)diazenylbenzoate + 2 NADH + 2 H(+). Functionally, quinone reductase that provides resistance to thiol-specific stress caused by electrophilic quinones. Its function is as follows. Also exhibits azoreductase activity. Catalyzes the reductive cleavage of the azo bond in aromatic azo compounds to the corresponding amines. The polypeptide is FMN-dependent NADH:quinone oxidoreductase (Streptomyces coelicolor (strain ATCC BAA-471 / A3(2) / M145)).